Consider the following 795-residue polypeptide: Phenylalanine--tRNA ligase beta subunit (795 aa).

The 110-residue stretch at 39 to 148 folds into the tRNA-binding domain; the sequence is AGSFHGVVVG…ADAPIGTDIR (110 aa). In terms of domain architecture, B5 spans 401–476; that stretch reads PKRATITLRR…RVYGYNNIPD (76 aa). Mg(2+)-binding residues include Asp-454, Asp-460, Glu-463, and Glu-464. In terms of domain architecture, FDX-ACB spans 701-794; it reads SRFPANRRDI…LKERFQASLR (94 aa).

This sequence belongs to the phenylalanyl-tRNA synthetase beta subunit family. Type 1 subfamily. As to quaternary structure, tetramer of two alpha and two beta subunits. Requires Mg(2+) as cofactor.

The protein resides in the cytoplasm. The enzyme catalyses tRNA(Phe) + L-phenylalanine + ATP = L-phenylalanyl-tRNA(Phe) + AMP + diphosphate + H(+). This is Phenylalanine--tRNA ligase beta subunit from Shigella boydii serotype 4 (strain Sb227).